A 634-amino-acid chain; its full sequence is Probable potassium transport system protein Kup (634 aa).

Transmembrane regions (helical) follow at residues 19–39 (AVGLMVGAVGVCYGDIGTSPL), 62–82 (VLSLIFWSLIWVVSIKYVIFV), 113–133 (FVVVAGLIGAALFYGDSMITP), 150–170 (GLEHWTVPLALIVLIGLFLIQ), 177–197 (IGILFGPVMVLWFGALAALGV), 225–245 (IGVAILGATVLALTGAEALYA), 259–279 (WFLLVLPALVLNYFGQGATIL), 291–311 (LLAPGWALLPMVALSTLATVI), 349–369 (IYIGGVNWALMVGVVLLVLGF), 379–399 (YGVAVTGTMLITTLLMGVVIW), 406–426 (LWLGVPFFCVMLAVDSLFFAA), and 431–451 (VVQGGAFPVIAGIVIFILMST).

The protein belongs to the HAK/KUP transporter (TC 2.A.72) family.

Its subcellular location is the cell inner membrane. The enzyme catalyses K(+)(in) + H(+)(in) = K(+)(out) + H(+)(out). Functionally, transport of potassium into the cell. Likely operates as a K(+):H(+) symporter. The chain is Probable potassium transport system protein Kup from Pseudomonas paraeruginosa (strain DSM 24068 / PA7) (Pseudomonas aeruginosa (strain PA7)).